Consider the following 349-residue polypeptide: Glycerol-1-phosphate dehydrogenase [NAD(P)+] (349 aa).

NAD(+) is bound by residues 95 to 99 (GKSID) and 117 to 120 (TSPS). Position 122 (Asp-122) interacts with substrate. Ser-126 lines the NAD(+) pocket. Asp-169 contacts substrate. Residues Asp-169 and His-249 each coordinate Zn(2+). His-253 serves as a coordination point for substrate. His-265 lines the Zn(2+) pocket.

This sequence belongs to the glycerol-1-phosphate dehydrogenase family. Homodimer. Zn(2+) is required as a cofactor.

It is found in the cytoplasm. It carries out the reaction sn-glycerol 1-phosphate + NAD(+) = dihydroxyacetone phosphate + NADH + H(+). The enzyme catalyses sn-glycerol 1-phosphate + NADP(+) = dihydroxyacetone phosphate + NADPH + H(+). The protein operates within membrane lipid metabolism; glycerophospholipid metabolism. Its function is as follows. Catalyzes the NAD(P)H-dependent reduction of dihydroxyacetonephosphate (DHAP or glycerone phosphate) to glycerol 1-phosphate (G1P). The G1P thus generated is used as the glycerophosphate backbone of phospholipids in the cellular membranes of Archaea. In Hyperthermus butylicus (strain DSM 5456 / JCM 9403 / PLM1-5), this protein is Glycerol-1-phosphate dehydrogenase [NAD(P)+].